The sequence spans 246 residues: Chaperone protein SefB (246 aa).

The first 24 residues, 1–24 (MYILNKFIRRTVIFFFFCYLPIAS), serve as a signal peptide directing secretion. C124 and C155 are disulfide-bonded.

Belongs to the periplasmic pilus chaperone family.

The protein localises to the periplasm. Required for the biogenesis of the SefA (SEF14) fimbria. This chain is Chaperone protein SefB (sefB), found in Salmonella enteritidis.